The chain runs to 62 residues: Protein YmcF (62 aa).

This sequence belongs to the YmcF/YnqF peptide family.

This chain is Protein YmcF, found in Escherichia coli (strain K12).